Consider the following 893-residue polypeptide: Valine--tRNA ligase (893 aa).

Residues 57-67 (PNVTGTLHMGH) carry the 'HIGH' region motif. Positions 545-549 (KMSKS) match the 'KMSKS' region motif. K548 provides a ligand contact to ATP. Residues 821–855 (TSGSVDLEAERKRLEKDLAAAQKELATTEGKLGNE) adopt a coiled-coil conformation.

It belongs to the class-I aminoacyl-tRNA synthetase family. ValS type 1 subfamily. As to quaternary structure, monomer.

The protein localises to the cytoplasm. The enzyme catalyses tRNA(Val) + L-valine + ATP = L-valyl-tRNA(Val) + AMP + diphosphate. Its function is as follows. Catalyzes the attachment of valine to tRNA(Val). As ValRS can inadvertently accommodate and process structurally similar amino acids such as threonine, to avoid such errors, it has a 'posttransfer' editing activity that hydrolyzes mischarged Thr-tRNA(Val) in a tRNA-dependent manner. The sequence is that of Valine--tRNA ligase from Nocardia farcinica (strain IFM 10152).